A 364-amino-acid polypeptide reads, in one-letter code: tRNA N6-adenosine threonylcarbamoyltransferase (364 aa).

2 residues coordinate Fe cation: histidine 115 and histidine 119. Substrate contacts are provided by residues 137–141, aspartate 170, glycine 183, and asparagine 288; that span reads LVSGG. Aspartate 316 serves as a coordination point for Fe cation.

Belongs to the KAE1 / TsaD family. Fe(2+) serves as cofactor.

The protein localises to the cytoplasm. The enzyme catalyses L-threonylcarbamoyladenylate + adenosine(37) in tRNA = N(6)-L-threonylcarbamoyladenosine(37) in tRNA + AMP + H(+). Functionally, required for the formation of a threonylcarbamoyl group on adenosine at position 37 (t(6)A37) in tRNAs that read codons beginning with adenine. Is involved in the transfer of the threonylcarbamoyl moiety of threonylcarbamoyl-AMP (TC-AMP) to the N6 group of A37, together with TsaE and TsaB. TsaD likely plays a direct catalytic role in this reaction. The sequence is that of tRNA N6-adenosine threonylcarbamoyltransferase from Bartonella tribocorum (strain CIP 105476 / IBS 506).